Reading from the N-terminus, the 266-residue chain is Putative carbamate hydrolase RutD (266 aa).

Belongs to the AB hydrolase superfamily. Hydrolase RutD family.

It carries out the reaction carbamate + 2 H(+) = NH4(+) + CO2. Its function is as follows. Involved in pyrimidine catabolism. May facilitate the hydrolysis of carbamate, a reaction that can also occur spontaneously. The sequence is that of Putative carbamate hydrolase RutD from Escherichia coli O26:H11 (strain 11368 / EHEC).